Reading from the N-terminus, the 932-residue chain is UPF0182 protein Syncc9902_1151 (932 aa).

9 consecutive transmembrane segments (helical) span residues 4–24, 40–60, 85–105, 124–144, 151–171, 201–221, 243–263, 293–313, and 315–335; these read FLWI…VEWV, MLQL…VLWL, VLMV…DLAI, MASE…VSLC, WVAV…WGVW, IQLG…HAVW, YRWL…LVWL, LLAF…IGHL, and RLLL…TPLT.

Belongs to the UPF0182 family.

It localises to the cell membrane. This chain is UPF0182 protein Syncc9902_1151, found in Synechococcus sp. (strain CC9902).